Consider the following 346-residue polypeptide: tRNA(Ile)-lysidine synthase (346 aa).

Residue 32-37 (SGGPDS) coordinates ATP.

This sequence belongs to the tRNA(Ile)-lysidine synthase family.

The protein resides in the cytoplasm. It carries out the reaction cytidine(34) in tRNA(Ile2) + L-lysine + ATP = lysidine(34) in tRNA(Ile2) + AMP + diphosphate + H(+). Its function is as follows. Ligates lysine onto the cytidine present at position 34 of the AUA codon-specific tRNA(Ile) that contains the anticodon CAU, in an ATP-dependent manner. Cytidine is converted to lysidine, thus changing the amino acid specificity of the tRNA from methionine to isoleucine. This chain is tRNA(Ile)-lysidine synthase, found in Rhodopseudomonas palustris (strain ATCC BAA-98 / CGA009).